The sequence spans 223 residues: Phosphoribosylformylglycinamidine synthase subunit PurQ (223 aa).

A Glutamine amidotransferase type-1 domain is found at 3–223 (SAVVQLPGLN…FASALDVVAA (221 aa)). Cysteine 86 (nucleophile) is an active-site residue. Catalysis depends on residues histidine 196 and glutamate 198.

In terms of assembly, part of the FGAM synthase complex composed of 1 PurL, 1 PurQ and 2 PurS subunits.

It localises to the cytoplasm. The catalysed reaction is N(2)-formyl-N(1)-(5-phospho-beta-D-ribosyl)glycinamide + L-glutamine + ATP + H2O = 2-formamido-N(1)-(5-O-phospho-beta-D-ribosyl)acetamidine + L-glutamate + ADP + phosphate + H(+). It catalyses the reaction L-glutamine + H2O = L-glutamate + NH4(+). The protein operates within purine metabolism; IMP biosynthesis via de novo pathway; 5-amino-1-(5-phospho-D-ribosyl)imidazole from N(2)-formyl-N(1)-(5-phospho-D-ribosyl)glycinamide: step 1/2. Its function is as follows. Part of the phosphoribosylformylglycinamidine synthase complex involved in the purines biosynthetic pathway. Catalyzes the ATP-dependent conversion of formylglycinamide ribonucleotide (FGAR) and glutamine to yield formylglycinamidine ribonucleotide (FGAM) and glutamate. The FGAM synthase complex is composed of three subunits. PurQ produces an ammonia molecule by converting glutamine to glutamate. PurL transfers the ammonia molecule to FGAR to form FGAM in an ATP-dependent manner. PurS interacts with PurQ and PurL and is thought to assist in the transfer of the ammonia molecule from PurQ to PurL. In Rhizobium etli (strain ATCC 51251 / DSM 11541 / JCM 21823 / NBRC 15573 / CFN 42), this protein is Phosphoribosylformylglycinamidine synthase subunit PurQ.